The primary structure comprises 255 residues: Indole-3-glycerol phosphate synthase (255 aa).

The protein belongs to the TrpC family.

The enzyme catalyses 1-(2-carboxyphenylamino)-1-deoxy-D-ribulose 5-phosphate + H(+) = (1S,2R)-1-C-(indol-3-yl)glycerol 3-phosphate + CO2 + H2O. It functions in the pathway amino-acid biosynthesis; L-tryptophan biosynthesis; L-tryptophan from chorismate: step 4/5. This chain is Indole-3-glycerol phosphate synthase (trpC), found in Priestia megaterium (strain ATCC 12872 / QMB1551) (Bacillus megaterium).